Consider the following 602-residue polypeptide: Proteasome-associated ATPase (602 aa).

A coiled-coil region spans residues 13 to 89 (PDAAEVERLR…LREEVDRLGQ (77 aa)). 289–294 (GCGKTL) serves as a coordination point for ATP. The docks into pockets in the proteasome alpha-ring stretch occupies residues 601–602 (YL).

The protein belongs to the AAA ATPase family. As to quaternary structure, homohexamer. Assembles into a hexameric ring structure that caps the 20S proteasome core. Strongly interacts with the prokaryotic ubiquitin-like protein Pup through a hydrophobic interface; the interacting region of ARC lies in its N-terminal coiled-coil domain. There is one Pup binding site per ARC hexamer ring. Upon ATP-binding, the C-terminus of ARC interacts with the alpha-rings of the proteasome core, possibly by binding to the intersubunit pockets.

It participates in protein degradation; proteasomal Pup-dependent pathway. Its function is as follows. ATPase which is responsible for recognizing, binding, unfolding and translocation of pupylated proteins into the bacterial 20S proteasome core particle. May be essential for opening the gate of the 20S proteasome via an interaction with its C-terminus, thereby allowing substrate entry and access to the site of proteolysis. Thus, the C-termini of the proteasomal ATPase may function like a 'key in a lock' to induce gate opening and therefore regulate proteolysis. The polypeptide is Proteasome-associated ATPase (Mycobacteroides abscessus (strain ATCC 19977 / DSM 44196 / CCUG 20993 / CIP 104536 / JCM 13569 / NCTC 13031 / TMC 1543 / L948) (Mycobacterium abscessus)).